Consider the following 472-residue polypeptide: Ribulose bisphosphate carboxylase large chain 1 (472 aa).

Substrate is bound by residues Asn-115 and Thr-165. Lys-167 acts as the Proton acceptor in catalysis. Substrate is bound at residue Lys-169. Mg(2+) contacts are provided by Lys-193, Asp-195, and Glu-196. An N6-carboxylysine modification is found at Lys-193. Residue His-286 is the Proton acceptor of the active site. Positions 287, 319, and 371 each coordinate substrate.

This sequence belongs to the RuBisCO large chain family. Type I subfamily. As to quaternary structure, heterohexadecamer of 8 large chains and 8 small chains. Mg(2+) serves as cofactor.

It carries out the reaction 2 (2R)-3-phosphoglycerate + 2 H(+) = D-ribulose 1,5-bisphosphate + CO2 + H2O. The catalysed reaction is D-ribulose 1,5-bisphosphate + O2 = 2-phosphoglycolate + (2R)-3-phosphoglycerate + 2 H(+). In terms of biological role, ruBisCO catalyzes two reactions: the carboxylation of D-ribulose 1,5-bisphosphate, the primary event in carbon dioxide fixation, as well as the oxidative fragmentation of the pentose substrate. Both reactions occur simultaneously and in competition at the same active site. This is Ribulose bisphosphate carboxylase large chain 1 from Rhodopseudomonas palustris (strain BisB5).